We begin with the raw amino-acid sequence, 194 residues long: MRPPLILASSSPYRRELLERLRLPFEIVVPAIDETPAPGESPDQTALRLARQKAEKVAAAHAGALVIGSDQVATLDGKQVGKPGDHARALAQLHWMRGRTVTFHSALCLYDGRTGQHQSEDVRTLATFRSLSDEELDAYLHLEHPYDVAGSAKSEGLGIALLERVESPDPTALVGLPLIALTTMLRNVHYPLFA.

Catalysis depends on Asp-70, which acts as the Proton acceptor.

It belongs to the Maf family. YceF subfamily. A divalent metal cation serves as cofactor.

Its subcellular location is the cytoplasm. The catalysed reaction is N(7)-methyl-GTP + H2O = N(7)-methyl-GMP + diphosphate + H(+). Functionally, nucleoside triphosphate pyrophosphatase that hydrolyzes 7-methyl-GTP (m(7)GTP). May have a dual role in cell division arrest and in preventing the incorporation of modified nucleotides into cellular nucleic acids. The protein is 7-methyl-GTP pyrophosphatase of Ralstonia nicotianae (strain ATCC BAA-1114 / GMI1000) (Ralstonia solanacearum).